A 93-amino-acid polypeptide reads, in one-letter code: uncharacterized protein (93 aa).

It belongs to the SIMIBI class G3E GTPase family. ArgK/MeaB subfamily.

This is an uncharacterized protein from Streptomyces virginiae (Streptomyces cinnamonensis).